A 2293-amino-acid chain; its full sequence is MKRHQFKSWIFELREILREIKNSHYFLDSWTKFDSVGSFTHIFFHQERFIKLFDPRIWSILLSRDSQGSTSNRYFTIKGVVLLVVAVLLYRINNRNMVERKNLYLMGLLPIPMNSIGPRNDTLEESFGSSNINRLIVSLLYLPKGKKISESCFMDPKESTWVLPITKKCIMPESNWGSRWWRNRIGKKRDSSCKISNETVARIEVSFKEKDIKYLEFLFVSYTDDPIRKDHDWELFDRLSPRKKRNIINLNSGQLFEILVKHWICYLMSAFREKRPIEVEGFFKQQGAESTIQSNDIEHVSHLFSRNKWGISLQNCAQFHMWQFRQDLFVSWGKNPHESDFLRNVSRENWIWLDNVWLVNKDRFFSKVRNVSSNIQYDSTRSIFVQVTDSSQLKGSSDQSRDRFDSISNSNEDLEYHTLINQREIQQLKERSILWDPSFLQTERTEIESERFPKCLSGYSSMSRLFTEREKQMNNHLLPEEIEEFLGNPTRSIRSFFSDRWSELHLGSNPTERSTRDQKLLKKQQDVSFVPSRRSENKEMVDIFKIITYLQNTVSIHPISSDPGCDMVPKDEPDMDSSNKISFLNKNQFFDLFHLFHDRNRGGYTLHHDFESEERFQEMVDLFTLSITEPDLVYHKGFAFSIDSYGLDQKKFLNEVFNSRDESKKKSLLVLPPIFYEENESFYRRIRKKSVRISCGNDLEDPKPKRVVFASNNIMEAVNQDRLIRNLIQIQYSTYRYIRNVSNRFFLMNRSDRNFEYGIQRDQIGTDTLNHRTIMKYTINQHLSNLKKSQKKWFDPLISRTERSMNRDPDAYRYKWSNGSKNFQEHLEHFVSEQKSRFQVVFDRLRINQYSIDWSEVIDKQDLSKSLRFFLSKSLLFLSKSLLFLSKSLPFFFVSFGNIPIHRSEIHIYELKGPNDQLCNQLLESIGVQIVHLNKLKPFLLADHDTSQKSKFLINGGTISPFLFNKISKWMIDSFHTRNNRRKSFDNTDSYFSMISHDRDNWLNPVKPFHRSSLISSFYKANRLRFLNNPHHFWFYCNKRFPFYVEKARINNYDLTYGQFLNILFIRNKIFSLCVGKKKHAFLERDTISPIESQVSNIFIPNDFPQSGDETYNLYKSFHFPIRSDPFVRRAIYSIADISGTPLTEGQIVNFERTYCQPLSDMNLSDSEGKNLDQYLNFNSNMGLIHTLCSEKSLPSEKRKKRSLCLKKCVEKRQMYRTFQRDSAFSNLSKWNLFQTYMPWFLTSTGCKYLNFTLLDTFSDLLPILSSSQKFVSIFHDIMHGSDISWPIPQKKWCLPQWNLISEISSKCLHNLLLSEEMIHRNNESPVPLIWTHLRSPNAREFLYSILFLLLVAGYLVRTHLLFVSRASSELHTEFEKIKSLMIPSYMIELRKLLDRYPTSELNSFWLKNLFLVALQQLGDSLEEIRGSASGGNMLLGGGPAYGVKSIRSKKKYLNINLIDIIDLISIIPNPINRITFSRNTRHLSRTSKEIYSLIRKRKNVNGDWIDDKIESWVANSDSIDDEEREFLVQFSTLTTEKRMDQILLSLTHSDNLSKNDSGYQMIEQPGSIYLRYLVDIHKKYLMNYEFNRSCLAERRIFLAHYQTITYSQTSCGANSFYFPSHGKPFSLRLALSPSRGILVIGSIGTGRSYLVKYLATNSYVPFITVFPNKFLDDKPKGYLIDDIDIDDSDDIDDSDDIDDDLDTELLTMMNALTMDMTPKIDRFDITLQFELAKAMSPCIIWIPNIHDLYVNESNYLSLGLLVNYLSRDCERCSTRNILVIASTHIPQKVDPALIAPNKSNTCIKIRRLLIPQQRKHFFTLSYTRGFHLEKKIFHTNGFGSITMGSNARDLVALTNEALSISITQKKSIIDTNTIRSALHRQTWDLRSQVRSVQDHGILFYQIGRAVAQNVLLSNCPIDPISIYMKKKSCKEGDSYLYKWYFELGTSMKKLTILLYLLSCSAGSVAQDLWSLPGPDEKNGITSYGFVENDSDLVHGLLEVEGVLVGSSRTEKDCSQFDNDRVTLLLRSEPRNPLDMMQNGSCSIVDQRFLYEKYESEFEEGEGALDPQQIEEDLFNHIVWAPRIWRPCGNLFDCIERPNELGFPYWARSFRGKRIIYHKEDELQENDSEFLQSGTMQYQTRDRSSKEQGFFRISQFIWDPGGPFFFLFKDQPFVSVFSRREFFADEEMSKGLLTSQTNPPTSIYKRWFIKNTQEKHFELLIHRQRWLRTNSSLSNGSFRSNTPSESYQYLSNLFLSNGTLLDQMTKTLLRKRWLFPDEMKHLIHVTGERFPIP.

1642–1649 is a binding site for ATP; that stretch reads GSIGTGRS.

Belongs to the Ycf2 family.

The protein localises to the plastid. It localises to the chloroplast stroma. Functionally, probable ATPase of unknown function. Its presence in a non-photosynthetic plant (Epifagus virginiana) and experiments in tobacco indicate that it has an essential function which is probably not related to photosynthesis. The sequence is that of Protein Ycf2 from Platanus occidentalis (Sycamore).